Reading from the N-terminus, the 178-residue chain is Acireductone dioxygenase (178 aa).

Fe(2+) is bound by residues His87, His89, Glu93, and His132. The Ni(2+) site is built by His87, His89, Glu93, and His132.

This sequence belongs to the acireductone dioxygenase (ARD) family. Fe(2+) serves as cofactor. The cofactor is Ni(2+).

It is found in the cytoplasm. The protein resides in the nucleus. The enzyme catalyses 1,2-dihydroxy-5-(methylsulfanyl)pent-1-en-3-one + O2 = 4-methylsulfanyl-2-oxobutanoate + formate + 2 H(+). It catalyses the reaction 1,2-dihydroxy-5-(methylsulfanyl)pent-1-en-3-one + O2 = 3-(methylsulfanyl)propanoate + CO + formate + 2 H(+). The protein operates within amino-acid biosynthesis; L-methionine biosynthesis via salvage pathway; L-methionine from S-methyl-5-thio-alpha-D-ribose 1-phosphate: step 5/6. Its function is as follows. Catalyzes 2 different reactions between oxygen and the acireductone 1,2-dihydroxy-3-keto-5-methylthiopentene (DHK-MTPene) depending upon the metal bound in the active site. Fe-containing acireductone dioxygenase (Fe-ARD) produces formate and 2-keto-4-methylthiobutyrate (KMTB), the alpha-ketoacid precursor of methionine in the methionine recycle pathway. Ni-containing acireductone dioxygenase (Ni-ARD) produces methylthiopropionate, carbon monoxide and formate, and does not lie on the methionine recycle pathway. The protein is Acireductone dioxygenase of Candida albicans (strain SC5314 / ATCC MYA-2876) (Yeast).